Here is a 190-residue protein sequence, read N- to C-terminus: Ribosome maturation factor RimM (190 aa).

Residues 114-190 (DDEYYWVDLI…CITVDWQPDY (77 aa)) form the PRC barrel domain.

The protein belongs to the RimM family. In terms of assembly, binds ribosomal protein uS19.

The protein resides in the cytoplasm. Its function is as follows. An accessory protein needed during the final step in the assembly of 30S ribosomal subunit, possibly for assembly of the head region. Essential for efficient processing of 16S rRNA. May be needed both before and after RbfA during the maturation of 16S rRNA. It has affinity for free ribosomal 30S subunits but not for 70S ribosomes. This is Ribosome maturation factor RimM from Acidovorax sp. (strain JS42).